A 132-amino-acid chain; its full sequence is ATP synthase epsilon chain, chloroplastic (132 aa).

It belongs to the ATPase epsilon chain family. As to quaternary structure, F-type ATPases have 2 components, CF(1) - the catalytic core - and CF(0) - the membrane proton channel. CF(1) has five subunits: alpha(3), beta(3), gamma(1), delta(1), epsilon(1). CF(0) has three main subunits: a, b and c.

It is found in the plastid. The protein localises to the chloroplast thylakoid membrane. Its function is as follows. Produces ATP from ADP in the presence of a proton gradient across the membrane. The sequence is that of ATP synthase epsilon chain, chloroplastic from Pylaiella littoralis (Seaweed).